Here is a 326-residue protein sequence, read N- to C-terminus: AA10 family lytic polysaccharide monooxygenase C (326 aa).

An N-terminal signal peptide occupies residues 1-32 (MVFSNSNASVSLFRLVALVATLSHLVFTFVDA). Cu(2+) contacts are provided by His33 and His118. Residues 33–200 (HGYVTFPASR…ANAFYQCLDL (168 aa)) enclose the Chitin-binding type-4 domain. The cysteines at positions 81 and 197 are disulfide-linked. N-linked (GlcNAc...) asparagine glycosylation is found at Asn206, Asn215, Asn266, and Asn303. Residues 206-326 (NSSSSSSSSN…KSQMRRDRQG (121 aa)) form a disordered region. The segment covering 207–281 (SSSSSSSSNS…NNGGSSGSTT (75 aa)) has biased composition (low complexity).

Belongs to the polysaccharide monooxygenase AA10 family. Cu(2+) is required as a cofactor.

It is found in the secreted. In terms of biological role, lytic polysaccharide monooxygenase (LPMO) that oxidatively cleaves alpha- and beta-chitin with C1 regioselectivity. Catalysis by LPMOs requires the reduction of the active-site copper from Cu(II) to Cu(I) by a reducing agent and H(2)O(2) or O(2) as a cosubstrate. Exhibits enzymatic activity on U.maydis fungal cell wall chitin and Boosts chitin hydrolysis by chitinase GH18A. The polypeptide is AA10 family lytic polysaccharide monooxygenase C (Mycosarcoma maydis (Corn smut fungus)).